The sequence spans 555 residues: Glucose-6-phosphate isomerase (555 aa).

The active-site Proton donor is E360. Active-site residues include H391 and K519.

The protein belongs to the GPI family.

It is found in the cytoplasm. It catalyses the reaction alpha-D-glucose 6-phosphate = beta-D-fructose 6-phosphate. It functions in the pathway carbohydrate biosynthesis; gluconeogenesis. It participates in carbohydrate degradation; glycolysis; D-glyceraldehyde 3-phosphate and glycerone phosphate from D-glucose: step 2/4. Functionally, catalyzes the reversible isomerization of glucose-6-phosphate to fructose-6-phosphate. In Acinetobacter baumannii (strain AB307-0294), this protein is Glucose-6-phosphate isomerase.